The chain runs to 308 residues: MKITPIAFESLGVRSQATLIETKDLRVLVDPAVSLAPRRYNLPPHQREVDRLTQLAKVLVDVAKDVDVIVVSHYHYDHHDPGYVIPTDIYKNKIVFLKDPQNMINNSQKYRRAPRFLRSIKDKPRKIEIADGKTFEFNTTTISFSPAVPHGADERLGYVIQVAISDKDSTVIFTSDIEGAPKDVHLKFTKEKMPTVIIIDGPLSYLLGRALKEEELENSIRNMEEIIKNGLETVIIDHHVLRDINYAQVLKPVHDIAKDLGVRVTTAAEYLNLEPLILEARRKELYKEDNRPAKIPRGLANLLNAGDG.

Belongs to the UPF0282 family.

The sequence is that of UPF0282 protein SSO3251 from Saccharolobus solfataricus (strain ATCC 35092 / DSM 1617 / JCM 11322 / P2) (Sulfolobus solfataricus).